Consider the following 158-residue polypeptide: Small ribosomal subunit protein uS9 (158 aa).

This sequence belongs to the universal ribosomal protein uS9 family.

This Brucella melitensis biotype 1 (strain ATCC 23456 / CCUG 17765 / NCTC 10094 / 16M) protein is Small ribosomal subunit protein uS9.